Reading from the N-terminus, the 154-residue chain is Probable prefoldin subunit 5 (154 aa).

Belongs to the prefoldin subunit alpha family. As to quaternary structure, heterohexamer of two PFD-alpha type and four PFD-beta type subunits.

Binds specifically to cytosolic chaperonin (c-CPN) and transfers target proteins to it. Binds to nascent polypeptide chain and promotes folding in an environment in which there are many competing pathways for nonnative proteins. This is Probable prefoldin subunit 5 from Caenorhabditis briggsae.